The primary structure comprises 440 residues: Probable exopolygalacturonase B (440 aa).

The first 20 residues, Met1–Ala20, serve as a signal peptide directing secretion. 3 N-linked (GlcNAc...) asparagine glycosylation sites follow: Asn65, Asn190, and Asn230. The Proton donor role is filled by Asp260. Cys262 and Cys279 form a disulfide bridge. Asn268 and Asn280 each carry an N-linked (GlcNAc...) asparagine glycan. The active site involves His283. Asn307, Asn334, and Asn371 each carry an N-linked (GlcNAc...) asparagine glycan. A disulfide bridge links Cys397 with Cys403. The N-linked (GlcNAc...) asparagine glycan is linked to Asn412.

Belongs to the glycosyl hydrolase 28 family.

The protein localises to the secreted. It carries out the reaction [(1-&gt;4)-alpha-D-galacturonosyl](n) + H2O = alpha-D-galacturonate + [(1-&gt;4)-alpha-D-galacturonosyl](n-1). Its function is as follows. Specific in hydrolyzing the terminal glycosidic bond of polygalacturonic acid and oligogalacturonates. This chain is Probable exopolygalacturonase B (pgxB), found in Emericella nidulans (strain FGSC A4 / ATCC 38163 / CBS 112.46 / NRRL 194 / M139) (Aspergillus nidulans).